Consider the following 657-residue polypeptide: MRLKIGFILRSLLVVGSFLGLVVLWSSLTPRPDDPSPLSRMREDRDVNDPMPNRGGNGLAPGEDRFKPVVPWPHVEGVEVDLESIRRINKAKNEQEHHAGGDSQKDIMQRQYLTFKPQTFTYHDPVLRPGILGNFEPKEPEPPGVVGGPGEKAKPLVLGPEFKQAIQASIKEFGFNMVASDMISLDRSVNDLRQEECKYWHYDENLLTSSVVIVFHNEGWSTLMRTVHSVIKRTPRKYLAEIVLIDDFSNKEHLKEKLDEYIKLWNGLVKVFRNERREGLIQARSIGAQKAKLGQVLIYLDAHCEVAVNWYAPLVAPISKDRTICTVPLIDVINGNTYEIIPQGGGDEDGYARGAWDWSMLWKRVPLTPQEKRLRKTKTEPYRSPAMAGGLFAIEREFFFELGLYDPGLQIWGGENFEISYKIWQCGGKLLFVPCSRVGHIYRLEGWQGNPPPIYVGSSPTLKNYVRVVEVWWDEYKDYFYASRPESQALPYGDISELKKFREDHNCKSFKWFMEEIAYDITSHYPLPPKNVDWGEIRGFETAYCIDSMGKTNGGFVELGPCHRMGGNQLFRINEANQLMQYDQCLTKGADGSKVMITHCNLNEFKEWQYFKNLHRFTHIPSGKCLDRSEVLHQVFISNCDSSKTTQKWEMNNIHSV.

The Cytoplasmic segment spans residues 1–6; sequence MRLKIG. The helical; Signal-anchor for type II membrane protein transmembrane segment at 7-29 threads the bilayer; it reads FILRSLLVVGSFLGLVVLWSSLT. Over 30–657 the chain is Lumenal; it reads PRPDDPSPLS…KWEMNNIHSV (628 aa). Residues 31–65 are disordered; sequence RPDDPSPLSRMREDRDVNDPMPNRGGNGLAPGEDR. Disulfide bonds link Cys197-Cys435, Cys426-Cys507, Cys545-Cys562, Cys585-Cys600, and Cys625-Cys640. The catalytic subdomain A stretch occupies residues 206-317; the sequence is LLTSSVVIVF…VNWYAPLVAP (112 aa). Positions 247 and 277 each coordinate substrate. Mn(2+) contacts are provided by Asp301 and His303. Positions 381-443 are catalytic subdomain B; the sequence is PYRSPAMAGG…PCSRVGHIYR (63 aa). Trp412 lines the substrate pocket. Mn(2+) is bound at residue His440. Residue Arg443 coordinates substrate. Residues 532 to 652 enclose the Ricin B-type lectin domain; that stretch reads VDWGEIRGFE…SKTTQKWEMN (121 aa).

The protein belongs to the glycosyltransferase 2 family. GalNAc-T subfamily. Requires Mn(2+) as cofactor. Widely expressed. Expressed in uterus, retina, kidney, small intestine, omentum, stomach and CNS.

The protein resides in the golgi apparatus membrane. It catalyses the reaction L-seryl-[protein] + UDP-N-acetyl-alpha-D-galactosamine = a 3-O-[N-acetyl-alpha-D-galactosaminyl]-L-seryl-[protein] + UDP + H(+). It carries out the reaction L-threonyl-[protein] + UDP-N-acetyl-alpha-D-galactosamine = a 3-O-[N-acetyl-alpha-D-galactosaminyl]-L-threonyl-[protein] + UDP + H(+). The protein operates within protein modification; protein glycosylation. In terms of biological role, glycopeptide transferase involved in O-linked oligosaccharide biosynthesis, which catalyzes the transfer of an N-acetyl-D-galactosamine residue to an already glycosylated peptide. In contrast to other proteins of the family, it does not act as a peptide transferase that transfers GalNAc onto serine or threonine residue on the protein receptor, but instead requires the prior addition of a GalNAc on a peptide before adding additional GalNAc moieties. Some peptide transferase activity is however not excluded, considering that its appropriate peptide substrate may remain unidentified. In Homo sapiens (Human), this protein is N-acetylgalactosaminyltransferase 7 (GALNT7).